Consider the following 582-residue polypeptide: Myoneurin (582 aa).

Residues 24-89 (CDCTIVIGEF…IYTGTLNLDS (66 aa)) form the BTB domain. The segment at 169–197 (QGALAKKSSQTKKKKKAFNSPKTGQNKTV) is disordered. Short sequence motifs (nuclear localization signal) lie at residues 174-190 (KKSS…NSPK) and 257-262 (KRKRGK). Polar residues predominate over residues 188 to 197 (SPKTGQNKTV). S289 is modified (phosphoserine). The C2H2-type 1; degenerate zinc finger occupies 302-324 (PMCNTRGKVFSEASSLRRHMRIH). 6 C2H2-type zinc fingers span residues 330 to 352 (YVCH…VRTH), 358 to 381 (YKCE…RMHH), 387 to 409 (YKCD…ARKH), 415 to 437 (YVCD…VRRH), 443 to 465 (YVCD…SRKH), and 471 to 494 (FICE…TKVH). Positions 489–538 (HKTKVHSGADKTPDSSAEDHTLSEQDSIQKSPLSETMDVKPSDTTLPLAL) are disordered. Over residues 495–511 (SGADKTPDSSAEDHTLS) the composition is skewed to basic and acidic residues. Residues 512 to 522 (EQDSIQKSPLS) are compositionally biased toward polar residues.

It belongs to the krueppel C2H2-type zinc-finger protein family.

It localises to the nucleus. The polypeptide is Myoneurin (MYNN) (Pongo abelii (Sumatran orangutan)).